Consider the following 192-residue polypeptide: Signal peptidase complex catalytic subunit SEC11C (192 aa).

Topologically, residues 1-28 (MVRAGAVGAHLPASGLDIFGDLKKMNKR) are cytoplasmic. Residues 29 to 48 (QLYYQVLNFAMIVSSALMIW) traverse the membrane as a helical; Signal-anchor for type II membrane protein segment. The Lumenal portion of the chain corresponds to 49 to 192 (KGLIVLTGSE…GAYVLLKRES (144 aa)). Active-site charge relay system residues include Ser-68, His-108, and Asp-134. Residues 177 to 188 (ALLAVMGAYVLL) form a C-terminal short (CTS) helix region.

This sequence belongs to the peptidase S26B family. As to quaternary structure, component of the signal peptidase complex paralog C (SPC-C) composed of a catalytic subunit SEC11C and three accessory subunits SPCS1, SPCS2 and SPCS3. Within the complex, interacts with SPCS2 and SPCS3. The complex induces a local thinning of the ER membrane which is used to measure the length of the signal peptide (SP) h-region of protein substrates. This ensures the selectivity of the complex towards h-regions shorter than 18-20 amino acids. Post-translationally, may undergo processing at the N-terminus.

The protein resides in the endoplasmic reticulum membrane. It carries out the reaction Cleavage of hydrophobic, N-terminal signal or leader sequences from secreted and periplasmic proteins.. Functionally, catalytic component of the signal peptidase complex (SPC) which catalyzes the cleavage of N-terminal signal sequences from nascent proteins as they are translocated into the lumen of the endoplasmic reticulum. Specifically cleaves N-terminal signal peptides that contain a hydrophobic alpha-helix (h-region) shorter than 18-20 amino acids. The polypeptide is Signal peptidase complex catalytic subunit SEC11C (SEC11C) (Homo sapiens (Human)).